We begin with the raw amino-acid sequence, 104 residues long: Ig kappa chain b5 variant C region (104 aa).

The Ig-like domain maps to Pro-5–Ser-100. A disulfide bridge links Cys-26 with Cys-85.

This is Ig kappa chain b5 variant C region from Oryctolagus cuniculus (Rabbit).